We begin with the raw amino-acid sequence, 735 residues long: Photosystem I P700 chlorophyll a apoprotein A2 (735 aa).

Transmembrane regions (helical) follow at residues Leu46–Ala69, Leu135–Gln158, Leu175–Ile199, Ile273–Tyr291, Leu333–Tyr356, Ala372–Ile398, Ala420–His442, and Phe518–Val536. Positions 560 and 569 each coordinate [4Fe-4S] cluster. Helical transmembrane passes span Ala576–Trp597 and Leu644–Ile666. The chlorophyll a site is built by His655, Met663, and Tyr671. Trp672 contacts phylloquinone. The chain crosses the membrane as a helical span at residues Val708–Ala728.

It belongs to the PsaA/PsaB family. The PsaA/B heterodimer binds the P700 chlorophyll special pair and subsequent electron acceptors. PSI consists of a core antenna complex that captures photons, and an electron transfer chain that converts photonic excitation into a charge separation. The cyanobacterial PSI reaction center is composed of one copy each of PsaA,B,C,D,E,F,I,J,K,L,M and X, and forms trimeric complexes. PSI electron transfer chain: 5 chlorophyll a, 1 chlorophyll a', 2 phylloquinones and 3 4Fe-4S clusters. PSI core antenna: 90 chlorophyll a, 22 carotenoids, 3 phospholipids and 1 galactolipid. P700 is a chlorophyll a/chlorophyll a' dimer, A0 is one or more chlorophyll a, A1 is one or both phylloquinones and FX is a shared 4Fe-4S iron-sulfur center. serves as cofactor.

It localises to the cellular thylakoid membrane. The catalysed reaction is reduced [plastocyanin] + hnu + oxidized [2Fe-2S]-[ferredoxin] = oxidized [plastocyanin] + reduced [2Fe-2S]-[ferredoxin]. Its function is as follows. PsaA and PsaB bind P700, the primary electron donor of photosystem I (PSI), as well as the electron acceptors A0, A1 and FX. PSI is a plastocyanin/cytochrome c6-ferredoxin oxidoreductase, converting photonic excitation into a charge separation, which transfers an electron from the donor P700 chlorophyll pair to the spectroscopically characterized acceptors A0, A1, FX, FA and FB in turn. Oxidized P700 is reduced on the lumenal side of the thylakoid membrane by plastocyanin or cytochrome c6. The protein is Photosystem I P700 chlorophyll a apoprotein A2 of Synechococcus sp. (strain CC9902).